Reading from the N-terminus, the 124-residue chain is Urocortin (124 aa).

The N-terminal stretch at 1-25 (MRQAGRAALLAALLLLVQLCPGSSQ) is a signal peptide. A disordered region spans residues 23–46 (SSQRSPEAAGVQDPSLRWSPGARN). Residues 26–82 (RSPEAAGVQDPSLRWSPGARNQGGGARALLLLLAERFPRRAGPGRLGLGTAGERPRR) constitute a propeptide that is removed on maturation. Val122 bears the Valine amide mark.

Belongs to the sauvagine/corticotropin-releasing factor/urotensin I family. As to quaternary structure, interacts with CRHR1 and CRHR2 (via their N-terminal extracellular domain). Keratinocytes in epidermis and the outer and inner root sheaths of hair follicles, epithelium of sebaceous and sweat glands, erector pili muscle, cutaneous blood vessel walls, cutaneous nerves and dermal mononuclear cells. Detected in plasma cells in the lamia propria in colon mucosa (at protein level). Expressed in pituitary and adrenal glands. Detected in plasma cells in the lamia propria in colon mucosa.

It is found in the secreted. Acts in vitro to stimulate the secretion of adrenocorticotropic hormone (ACTH). Binds with high affinity to CRF receptor types 1, 2-alpha, and 2-beta. Plays a role in the establishment of normal hearing thresholds. Reduces food intake and regulates ghrelin levels in gastric body and plasma. This chain is Urocortin (UCN), found in Homo sapiens (Human).